We begin with the raw amino-acid sequence, 384 residues long: Ribosomal RNA small subunit methyltransferase H (384 aa).

S-adenosyl-L-methionine is bound by residues 99 to 101 (GGH), Asp118, Tyr145, Asp169, and Gln176.

It belongs to the methyltransferase superfamily. RsmH family.

Its subcellular location is the cytoplasm. The catalysed reaction is cytidine(1402) in 16S rRNA + S-adenosyl-L-methionine = N(4)-methylcytidine(1402) in 16S rRNA + S-adenosyl-L-homocysteine + H(+). Functionally, specifically methylates the N4 position of cytidine in position 1402 (C1402) of 16S rRNA. The sequence is that of Ribosomal RNA small subunit methyltransferase H from Mycobacteroides abscessus (strain ATCC 19977 / DSM 44196 / CCUG 20993 / CIP 104536 / JCM 13569 / NCTC 13031 / TMC 1543 / L948) (Mycobacterium abscessus).